Consider the following 263-residue polypeptide: tRNA uridine(34) hydroxylase (263 aa).

Residues glutamate 129–tyrosine 223 form the Rhodanese domain. The active-site Cysteine persulfide intermediate is cysteine 183.

The protein belongs to the TrhO family.

The enzyme catalyses uridine(34) in tRNA + AH2 + O2 = 5-hydroxyuridine(34) in tRNA + A + H2O. Functionally, catalyzes oxygen-dependent 5-hydroxyuridine (ho5U) modification at position 34 in tRNAs. In Variovorax paradoxus (strain S110), this protein is tRNA uridine(34) hydroxylase.